Here is a 744-residue protein sequence, read N- to C-terminus: Biotin sulfoxide reductase (744 aa).

Residue S121 participates in Mo-bis(molybdopterin guanine dinucleotide) binding.

The protein belongs to the prokaryotic molybdopterin-containing oxidoreductase family. Mo-bis(molybdopterin guanine dinucleotide) serves as cofactor.

This enzyme may serve as a scavenger, allowing the cell to utilize biotin sulfoxide as a biotin source. It reduces a spontaneous oxidation product of biotin, D-biotin D-sulfoxide (BSO or BDS), back to biotin. The sequence is that of Biotin sulfoxide reductase from Cereibacter sphaeroides (Rhodobacter sphaeroides).